Reading from the N-terminus, the 137-residue chain is Ribonuclease kappa (137 aa).

The next 2 helical transmembrane spans lie at 52-72 (ACGI…GIFF) and 104-124 (VSYN…FSFC).

It belongs to the RNase K family. In terms of assembly, interacts with the proton translocation complex V0 of the V-ATPase. Interacts with ATP6AP1. Widely expressed.

The protein localises to the endomembrane system. It localises to the cytoplasmic vesicle. The protein resides in the clathrin-coated vesicle membrane. Functionally, endoribonuclease which preferentially cleaves ApU and ApG phosphodiester bonds. Hydrolyzes UpU bonds at a lower rate. Regulates the activity of vacuolar (H+)-ATPase (V-ATPase) which is responsible for acidifying and maintaining the pH of intracellular compartments. Required at an early stage of receptor-mediated endocytosis. (Microbial infection) Required at an early stage of both clathrin-mediated and clathrin-independent endocytic uptake of a diverse set of viruses, including dengue, West Nile, Sindbis, Rift Valley Fever, influenza, and human rhinoviruses. The polypeptide is Ribonuclease kappa (RNASEK) (Homo sapiens (Human)).